Here is a 226-residue protein sequence, read N- to C-terminus: RLA class II histocompatibility antigen, DP alpha-1 chain (226 aa).

Residues 1 to 189 are Extracellular-facing; sequence EHVSVFVIFA…PIQMPETTET (189 aa). Residues N75 and N115 are each glycosylated (N-linked (GlcNAc...) asparagine). In terms of domain architecture, Ig-like C1-type spans 84-176; it reads PEVIVFPKEP…LDAPLLTHWE (93 aa). A disulfide bridge links C104 with C160. Residues 190 to 210 traverse the membrane as a helical segment; that stretch reads VVCALGLVVGLAGVVVGIVLI. Topologically, residues 211–226 are cytoplasmic; the sequence is TKALRSSPDPRARRPL.

Belongs to the MHC class II family.

The protein resides in the membrane. The chain is RLA class II histocompatibility antigen, DP alpha-1 chain from Oryctolagus cuniculus (Rabbit).